A 185-amino-acid chain; its full sequence is Ribosome-recycling factor (185 aa).

It belongs to the RRF family.

The protein resides in the cytoplasm. Its function is as follows. Responsible for the release of ribosomes from messenger RNA at the termination of protein biosynthesis. May increase the efficiency of translation by recycling ribosomes from one round of translation to another. This chain is Ribosome-recycling factor, found in Aliarcobacter butzleri (strain RM4018) (Arcobacter butzleri).